A 58-amino-acid polypeptide reads, in one-letter code: Large ribosomal subunit protein uL30 (58 aa).

This sequence belongs to the universal ribosomal protein uL30 family. Part of the 50S ribosomal subunit.

This Pseudomonas putida (strain W619) protein is Large ribosomal subunit protein uL30.